A 66-amino-acid polypeptide reads, in one-letter code: U8-myrmicitoxin-Tb1a (66 aa).

Residues 1-26 (MKLSFLSLAFAVIFVMAIMYAPQVEA) form the signal peptide. A propeptide spanning residues 27 to 50 (KASADADADADAAASADALAKASA) is cleaved from the precursor.

Expressed by the venom gland.

It localises to the secreted. In vivo, this neurotoxin paralyzes about 50% of blowflies (L.caesar) one hour after intrathoracic injection, when tested at high doses (54 nmol/g). This Tetramorium bicarinatum (Tramp ant) protein is U8-myrmicitoxin-Tb1a.